The primary structure comprises 956 residues: UvrABC system protein A (956 aa).

Residue glycine 33 to serine 40 coordinates ATP. The segment at cysteine 252–cysteine 279 adopts a C4-type zinc-finger fold. ABC transporter domains follow at residues tryptophan 309 to isoleucine 587 and glycine 607 to lysine 936. Position 639–646 (glycine 639–serine 646) interacts with ATP. Residues cysteine 738 to cysteine 764 form a C4-type zinc finger.

It belongs to the ABC transporter superfamily. UvrA family. Forms a heterotetramer with UvrB during the search for lesions.

The protein localises to the cytoplasm. Functionally, the UvrABC repair system catalyzes the recognition and processing of DNA lesions. UvrA is an ATPase and a DNA-binding protein. A damage recognition complex composed of 2 UvrA and 2 UvrB subunits scans DNA for abnormalities. When the presence of a lesion has been verified by UvrB, the UvrA molecules dissociate. This chain is UvrABC system protein A, found in Listeria monocytogenes serotype 4b (strain F2365).